Consider the following 67-residue polypeptide: Sodium channel neurotoxin MeuNaTxalpha-10 (67 aa).

In terms of domain architecture, LCN-type CS-alpha/beta spans 2 to 66 (RDGYIAKPHN…VPIRIPGKCH (65 aa)). Cystine bridges form between Cys-12–Cys-65, Cys-16–Cys-38, Cys-24–Cys-48, and Cys-28–Cys-50. Position 67 (Arg-67) is a propeptide, removed by a carboxypeptidase.

Belongs to the long (4 C-C) scorpion toxin superfamily. Sodium channel inhibitor family. Alpha subfamily. In terms of tissue distribution, expressed by the venom gland.

Its subcellular location is the secreted. Functionally, alpha toxins bind voltage-independently at site-3 of sodium channels (Nav) and inhibit the inactivation of the activated channels, thereby blocking neuronal transmission. The chain is Sodium channel neurotoxin MeuNaTxalpha-10 from Mesobuthus eupeus (Lesser Asian scorpion).